The sequence spans 430 residues: Transcobalamin-2 (430 aa).

An N-terminal signal peptide occupies residues 1–18; sequence MELLKALLLLSGVFGALA. Cystine bridges form between cysteine 21/cysteine 270, cysteine 116/cysteine 312, and cysteine 165/cysteine 208. Cob(II)alamin-binding positions include 152-156, histidine 193, 193-197, asparagine 245, serine 248, glutamine 294, and 398-400; these read TNYYQ, HVSVD, and WQL.

Belongs to the eukaryotic cobalamin transport proteins family. As to quaternary structure, interacts with CD320 (via LDL-receptor class A domains).

The protein localises to the secreted. Functionally, primary vitamin B12-binding and transport protein. Delivers cobalamin to cells. This is Transcobalamin-2 (Tcn2) from Mus musculus (Mouse).